The sequence spans 95 residues: Aspartyl/glutamyl-tRNA(Asn/Gln) amidotransferase subunit C (95 aa).

It belongs to the GatC family. Heterotrimer of A, B and C subunits.

It catalyses the reaction L-glutamyl-tRNA(Gln) + L-glutamine + ATP + H2O = L-glutaminyl-tRNA(Gln) + L-glutamate + ADP + phosphate + H(+). The catalysed reaction is L-aspartyl-tRNA(Asn) + L-glutamine + ATP + H2O = L-asparaginyl-tRNA(Asn) + L-glutamate + ADP + phosphate + 2 H(+). Functionally, allows the formation of correctly charged Asn-tRNA(Asn) or Gln-tRNA(Gln) through the transamidation of misacylated Asp-tRNA(Asn) or Glu-tRNA(Gln) in organisms which lack either or both of asparaginyl-tRNA or glutaminyl-tRNA synthetases. The reaction takes place in the presence of glutamine and ATP through an activated phospho-Asp-tRNA(Asn) or phospho-Glu-tRNA(Gln). This is Aspartyl/glutamyl-tRNA(Asn/Gln) amidotransferase subunit C from Chlorobium phaeobacteroides (strain BS1).